The chain runs to 277 residues: 5'-nucleotidase SurE (277 aa).

The a divalent metal cation site is built by Asp14, Asp15, Ser46, and Asn104.

This sequence belongs to the SurE nucleotidase family. The cofactor is a divalent metal cation.

It localises to the cytoplasm. It catalyses the reaction a ribonucleoside 5'-phosphate + H2O = a ribonucleoside + phosphate. Its function is as follows. Nucleotidase that shows phosphatase activity on nucleoside 5'-monophosphates. The sequence is that of 5'-nucleotidase SurE from Picosynechococcus sp. (strain ATCC 27264 / PCC 7002 / PR-6) (Agmenellum quadruplicatum).